Consider the following 480-residue polypeptide: ATP synthase subunit beta (480 aa).

152-159 (GGAGVGKT) is an ATP binding site.

Belongs to the ATPase alpha/beta chains family. As to quaternary structure, F-type ATPases have 2 components, CF(1) - the catalytic core - and CF(0) - the membrane proton channel. CF(1) has five subunits: alpha(3), beta(3), gamma(1), delta(1), epsilon(1). CF(0) has three main subunits: a(1), b(2) and c(9-12). The alpha and beta chains form an alternating ring which encloses part of the gamma chain. CF(1) is attached to CF(0) by a central stalk formed by the gamma and epsilon chains, while a peripheral stalk is formed by the delta and b chains.

The protein resides in the cell membrane. It catalyses the reaction ATP + H2O + 4 H(+)(in) = ADP + phosphate + 5 H(+)(out). In terms of biological role, produces ATP from ADP in the presence of a proton gradient across the membrane. The catalytic sites are hosted primarily by the beta subunits. In Wolbachia sp. subsp. Brugia malayi (strain TRS), this protein is ATP synthase subunit beta.